Reading from the N-terminus, the 514-residue chain is Photosystem II CP47 reaction center protein (514 aa).

The next 6 helical transmembrane spans lie at 21–36 (AVHL…WAGS), 109–123 (IVLS…VWHW), 148–164 (GGHL…FGTF), 211–226 (IAAG…FHLT), 245–260 (ALAS…AFVV), and 465–480 (CFAL…HGAR).

This sequence belongs to the PsbB/PsbC family. PsbB subfamily. PSII is composed of 1 copy each of membrane proteins PsbA, PsbB, PsbC, PsbD, PsbE, PsbF, PsbH, PsbI, PsbJ, PsbK, PsbL, PsbM, PsbT, PsbX, PsbY, PsbZ, Psb30/Ycf12, peripheral proteins PsbO, CyanoQ (PsbQ), PsbU, PsbV and a large number of cofactors. It forms dimeric complexes. Binds multiple chlorophylls. PSII binds additional chlorophylls, carotenoids and specific lipids. serves as cofactor.

The protein resides in the cellular thylakoid membrane. Functionally, one of the components of the core complex of photosystem II (PSII). It binds chlorophyll and helps catalyze the primary light-induced photochemical processes of PSII. PSII is a light-driven water:plastoquinone oxidoreductase, using light energy to abstract electrons from H(2)O, generating O(2) and a proton gradient subsequently used for ATP formation. The sequence is that of Photosystem II CP47 reaction center protein from Prochlorothrix hollandica.